Reading from the N-terminus, the 156-residue chain is MPRRREVAKRVILPDPKYADRVVAKLINIIMLDGKKSTAEKALYGAMEIAAGKAGEEPVKVLKKCLDNIKPMLEVKSRRVGGSTYQVPVEVRPERRVSLAMRWLVKYSNTRSEKTVTDKLAGEILDAYNNRGSAVKKREDTHKMAEANRAFAHYRW.

This sequence belongs to the universal ribosomal protein uS7 family. Part of the 30S ribosomal subunit. Contacts proteins S9 and S11.

Functionally, one of the primary rRNA binding proteins, it binds directly to 16S rRNA where it nucleates assembly of the head domain of the 30S subunit. Is located at the subunit interface close to the decoding center, probably blocks exit of the E-site tRNA. This chain is Small ribosomal subunit protein uS7, found in Citrifermentans bemidjiense (strain ATCC BAA-1014 / DSM 16622 / JCM 12645 / Bem) (Geobacter bemidjiensis).